The following is a 116-amino-acid chain: MNLILLMVIGFLIFIGTYMILSVNLIRIVIGISIYTHAGNLIIMSMGNYSKNKVEPLIGEGSQNFVDPLLQAIVLTAIVIGFAMTAFLLVLVYRTYRVTKEDEIDVLRGDDDDANE.

The next 3 membrane-spanning stretches (helical) occupy residues leucine 3–valine 23, isoleucine 28–asparagine 48, and alanine 72–valine 92.

It belongs to the CPA3 antiporters (TC 2.A.63) subunit C family. As to quaternary structure, may form a heterooligomeric complex that consists of seven subunits: mnhA2, mnhB2, mnhC2, mnhD2, mnhE2, mnhF2 and mnhG2.

Its subcellular location is the cell membrane. This is Putative antiporter subunit mnhC2 (mnhC2) from Staphylococcus saprophyticus subsp. saprophyticus (strain ATCC 15305 / DSM 20229 / NCIMB 8711 / NCTC 7292 / S-41).